Consider the following 361-residue polypeptide: UDP-3-O-acylglucosamine N-acyltransferase (361 aa).

The active-site Proton acceptor is H253.

It belongs to the transferase hexapeptide repeat family. LpxD subfamily. As to quaternary structure, homotrimer.

The catalysed reaction is a UDP-3-O-[(3R)-3-hydroxyacyl]-alpha-D-glucosamine + a (3R)-hydroxyacyl-[ACP] = a UDP-2-N,3-O-bis[(3R)-3-hydroxyacyl]-alpha-D-glucosamine + holo-[ACP] + H(+). Its pathway is bacterial outer membrane biogenesis; LPS lipid A biosynthesis. In terms of biological role, catalyzes the N-acylation of UDP-3-O-acylglucosamine using 3-hydroxyacyl-ACP as the acyl donor. Is involved in the biosynthesis of lipid A, a phosphorylated glycolipid that anchors the lipopolysaccharide to the outer membrane of the cell. The chain is UDP-3-O-acylglucosamine N-acyltransferase from Burkholderia pseudomallei (strain 668).